An 84-amino-acid polypeptide reads, in one-letter code: Putative membrane protein insertion efficiency factor (84 aa).

A disordered region spans residues 63-84; that stretch reads GEDPVPNHFTLRRNKKEKPSKS.

It belongs to the UPF0161 family.

Its subcellular location is the cell membrane. Could be involved in insertion of integral membrane proteins into the membrane. This chain is Putative membrane protein insertion efficiency factor, found in Streptococcus mutans serotype c (strain ATCC 700610 / UA159).